Consider the following 118-residue polypeptide: NADH-ubiquinone oxidoreductase chain 3 (118 aa).

Helical transmembrane passes span 7 to 27, 62 to 82, and 87 to 107; these read ICIS…VPFL, LVSI…PWAV, and IDLF…IGFL.

It belongs to the complex I subunit 3 family.

It is found in the mitochondrion membrane. It catalyses the reaction a ubiquinone + NADH + 5 H(+)(in) = a ubiquinol + NAD(+) + 4 H(+)(out). Its function is as follows. Core subunit of the mitochondrial membrane respiratory chain NADH dehydrogenase (Complex I) that is believed to belong to the minimal assembly required for catalysis. Complex I functions in the transfer of electrons from NADH to the respiratory chain. The immediate electron acceptor for the enzyme is believed to be ubiquinone. The sequence is that of NADH-ubiquinone oxidoreductase chain 3 (ND3) from Oenothera berteroana (Bertero's evening primrose).